A 104-amino-acid chain; its full sequence is Large ribosomal subunit protein uL24 (104 aa).

It belongs to the universal ribosomal protein uL24 family. In terms of assembly, part of the 50S ribosomal subunit.

In terms of biological role, one of two assembly initiator proteins, it binds directly to the 5'-end of the 23S rRNA, where it nucleates assembly of the 50S subunit. Its function is as follows. One of the proteins that surrounds the polypeptide exit tunnel on the outside of the subunit. The sequence is that of Large ribosomal subunit protein uL24 from Erwinia tasmaniensis (strain DSM 17950 / CFBP 7177 / CIP 109463 / NCPPB 4357 / Et1/99).